A 750-amino-acid chain; its full sequence is Photosystem I P700 chlorophyll a apoprotein A1 (750 aa).

8 consecutive transmembrane segments (helical) span residues 72–95, 158–181, 197–221, 293–311, 348–371, 387–413, 435–457, and 532–550; these read VFSAHFGQLAVIFIWLSGMYFHGA, LYSTAIGGLVMAGLMLFAGWFHYH, LNHHLAGLLGLGSLSWAGHQIHVSL, TAHHHLAIAVLFLVAGHMY, WHAQLAINLALFGSLSIIVAHHMY, LSIFTHHTWIGGFCIVGGAAHAAIFMV, AIISHLNWVCIFLGFHSFGLYIH, and FLVHHIHAFTIHVTVLILL. Positions 574 and 583 each coordinate [4Fe-4S] cluster. 2 helical membrane passes run 590–611 and 664–686; these read HVFLGLFWMYNSLSIAIFHFSW and LSAYGLMFLGAHFVWAFSLMFLF. Chlorophyll a' is bound at residue histidine 675. Chlorophyll a is bound by residues methionine 683 and tyrosine 691. Tryptophan 692 lines the phylloquinone pocket. Residues 724–744 traverse the membrane as a helical segment; the sequence is AVGVAHYLLGGIATTWAFFLA.

The protein belongs to the PsaA/PsaB family. The PsaA/B heterodimer binds the P700 chlorophyll special pair and subsequent electron acceptors. PSI consists of a core antenna complex that captures photons, and an electron transfer chain that converts photonic excitation into a charge separation. The eukaryotic PSI reaction center is composed of at least 11 subunits. It depends on P700 is a chlorophyll a/chlorophyll a' dimer, A0 is one or more chlorophyll a, A1 is one or both phylloquinones and FX is a shared 4Fe-4S iron-sulfur center. as a cofactor.

The protein localises to the plastid. It localises to the chloroplast thylakoid membrane. It carries out the reaction reduced [plastocyanin] + hnu + oxidized [2Fe-2S]-[ferredoxin] = oxidized [plastocyanin] + reduced [2Fe-2S]-[ferredoxin]. In terms of biological role, psaA and PsaB bind P700, the primary electron donor of photosystem I (PSI), as well as the electron acceptors A0, A1 and FX. PSI is a plastocyanin-ferredoxin oxidoreductase, converting photonic excitation into a charge separation, which transfers an electron from the donor P700 chlorophyll pair to the spectroscopically characterized acceptors A0, A1, FX, FA and FB in turn. Oxidized P700 is reduced on the lumenal side of the thylakoid membrane by plastocyanin. In Chlorokybus atmophyticus (Soil alga), this protein is Photosystem I P700 chlorophyll a apoprotein A1.